A 159-amino-acid polypeptide reads, in one-letter code: Transmembrane protein 42 (159 aa).

The next 4 helical transmembrane spans lie at 37 to 57 (FWGVFNCLCAGAFGALAAASA), 68 to 88 (GFCVLGIIMMATTNSLMWTFF), 100 to 120 (IASVTVTFSNILNSAFLGFVL), and 124 to 144 (CQEVLWWGGVFLILCGLTLIH).

The protein resides in the membrane. In Bos taurus (Bovine), this protein is Transmembrane protein 42 (TMEM42).